The primary structure comprises 447 residues: UMP-CMP kinase 2, mitochondrial (447 aa).

The N-terminal 73 residues, 1–73 (MALISRPRAP…ELLGPPGRSY (73 aa)), are a transit peptide targeting the mitochondrion. Residue 259–266 (GLDATGKT) coordinates ATP. A coiled-coil region spans residues 380–412 (EERVRRLQGRGQEKTKEEAELEANNVFRQKVEM).

Belongs to the thymidylate kinase family. In terms of tissue distribution, strongly expressed in the brain.

It is found in the mitochondrion. The catalysed reaction is CMP + ATP = CDP + ADP. It carries out the reaction dCMP + ATP = dCDP + ADP. It catalyses the reaction a 2'-deoxyribonucleoside 5'-diphosphate + ATP = a 2'-deoxyribonucleoside 5'-triphosphate + ADP. The enzyme catalyses a ribonucleoside 5'-diphosphate + ATP = a ribonucleoside 5'-triphosphate + ADP. Mitochondrial nucleotide monophosphate kinase needed for salvage dNTP synthesis that mediates immunomodulatory and antiviral activities through IFN-dependent and IFN-independent pathways. Restricts the replication of multiple viruses including flaviviruses or coronaviruses. Together with viperin/RSAD2 and ddhCTP, suppresses the replication of several coronaviruses through inhibition of the viral RNA-dependent RNA polymerase activities. Concerning flaviviruses, restricts RNA translation when localized to the mitochondria independently of its kinase activity. Is able to phosphorylate dUMP, dCMP, CMP, UMP and monophosphates of the pyrimidine nucleoside analogs ddC, dFdC, araC, BVDU and FdUrd with ATP as phosphate donor. Efficacy is highest for dUMP followed by dCMP while CMP and UMP are poor substrates. Controls therefore mitochondrial DNA synthesis by supplying required deoxyribonucleotides. CMPK2-dependent mitochondrial DNA synthesis is necessary for the production of oxidized mitochondrial DNA fragments after exposure to NLRP3 activators. In turn, cytosolic oxidized mtDNA associates with the NLRP3 inflammasome complex and is required for its activation. The polypeptide is UMP-CMP kinase 2, mitochondrial (Cmpk2) (Mus musculus (Mouse)).